Here is a 236-residue protein sequence, read N- to C-terminus: Phosphoribosylaminoimidazole-succinocarboxamide synthase (236 aa).

It belongs to the SAICAR synthetase family.

The catalysed reaction is 5-amino-1-(5-phospho-D-ribosyl)imidazole-4-carboxylate + L-aspartate + ATP = (2S)-2-[5-amino-1-(5-phospho-beta-D-ribosyl)imidazole-4-carboxamido]succinate + ADP + phosphate + 2 H(+). The protein operates within purine metabolism; IMP biosynthesis via de novo pathway; 5-amino-1-(5-phospho-D-ribosyl)imidazole-4-carboxamide from 5-amino-1-(5-phospho-D-ribosyl)imidazole-4-carboxylate: step 1/2. The protein is Phosphoribosylaminoimidazole-succinocarboxamide synthase of Pseudomonas putida (strain ATCC 700007 / DSM 6899 / JCM 31910 / BCRC 17059 / LMG 24140 / F1).